The primary structure comprises 537 residues: Chaperonin GroEL (537 aa).

ATP is bound by residues 29 to 32 (TLGP), 86 to 90 (DGTTT), Gly413, 477 to 479 (NAA), and Asp493.

It belongs to the chaperonin (HSP60) family. As to quaternary structure, forms a cylinder of 14 subunits composed of two heptameric rings stacked back-to-back. Interacts with the co-chaperonin GroES.

It is found in the cytoplasm. The catalysed reaction is ATP + H2O + a folded polypeptide = ADP + phosphate + an unfolded polypeptide.. In terms of biological role, together with its co-chaperonin GroES, plays an essential role in assisting protein folding. The GroEL-GroES system forms a nano-cage that allows encapsulation of the non-native substrate proteins and provides a physical environment optimized to promote and accelerate protein folding. This Parascardovia denticolens (Bifidobacterium denticolens) protein is Chaperonin GroEL.